The chain runs to 40 residues: Photosystem II reaction center protein J (40 aa).

The chain crosses the membrane as a helical span at residues 8-28 (IPLWLIGTVTGILVIGLIGFF).

Belongs to the PsbJ family. PSII is composed of 1 copy each of membrane proteins PsbA, PsbB, PsbC, PsbD, PsbE, PsbF, PsbH, PsbI, PsbJ, PsbK, PsbL, PsbM, PsbT, PsbX, PsbY, PsbZ, Psb30/Ycf12, at least 3 peripheral proteins of the oxygen-evolving complex and a large number of cofactors. It forms dimeric complexes.

Its subcellular location is the plastid. The protein resides in the chloroplast thylakoid membrane. In terms of biological role, one of the components of the core complex of photosystem II (PSII). PSII is a light-driven water:plastoquinone oxidoreductase that uses light energy to abstract electrons from H(2)O, generating O(2) and a proton gradient subsequently used for ATP formation. It consists of a core antenna complex that captures photons, and an electron transfer chain that converts photonic excitation into a charge separation. This is Photosystem II reaction center protein J from Zea mays (Maize).